A 224-amino-acid chain; its full sequence is Ras-related protein Rab-32C (224 aa).

Positions 1 to 22 (MYSNKNDKDKDKDQNNENNKNN) are disordered. 35–42 (GKLACGKT) provides a ligand contact to GTP. The Effector region signature appears at 57-65 (YKPTIGVDF). GTP is bound by residues 83-87 (DIAGQ) and 142-145 (NKCD). The segment at 203-224 (GFKLSDQSQSTETTPTQSKTCC) is disordered. Residues 209-224 (QSQSTETTPTQSKTCC) show a composition bias toward low complexity. 2 S-geranylgeranyl cysteine lipidation sites follow: cysteine 223 and cysteine 224.

Belongs to the small GTPase superfamily. Rab family.

This is Ras-related protein Rab-32C (rab32C) from Dictyostelium discoideum (Social amoeba).